The following is a 261-amino-acid chain: Small ribosomal subunit protein eS1B (261 aa).

The segment covering 1–18 has biased composition (basic residues); sequence MTLGKNKRISKGGKRGKK. Residues 1–23 form a disordered region; that stretch reads MTLGKNKRISKGGKRGKKKAQET.

This sequence belongs to the eukaryotic ribosomal protein eS1 family. In terms of assembly, component of the small ribosomal subunit. Mature ribosomes consist of a small (40S) and a large (60S) subunit. The 40S subunit contains about 33 different proteins and 1 molecule of RNA (18S). The 60S subunit contains about 49 different proteins and 3 molecules of RNA (25S, 5.8S and 5S).

It localises to the cytoplasm. The polypeptide is Small ribosomal subunit protein eS1B (Trypanosoma cruzi (strain CL Brener)).